We begin with the raw amino-acid sequence, 290 residues long: Lipoyl synthase (290 aa).

[4Fe-4S] cluster contacts are provided by cysteine 38, cysteine 43, cysteine 49, cysteine 64, cysteine 68, cysteine 71, and serine 277. The Radical SAM core domain maps to 50-266 (WSKGTATFLL…REIALDAGFR (217 aa)).

This sequence belongs to the radical SAM superfamily. Lipoyl synthase family. The cofactor is [4Fe-4S] cluster.

It localises to the cytoplasm. It carries out the reaction [[Fe-S] cluster scaffold protein carrying a second [4Fe-4S](2+) cluster] + N(6)-octanoyl-L-lysyl-[protein] + 2 oxidized [2Fe-2S]-[ferredoxin] + 2 S-adenosyl-L-methionine + 4 H(+) = [[Fe-S] cluster scaffold protein] + N(6)-[(R)-dihydrolipoyl]-L-lysyl-[protein] + 4 Fe(3+) + 2 hydrogen sulfide + 2 5'-deoxyadenosine + 2 L-methionine + 2 reduced [2Fe-2S]-[ferredoxin]. The protein operates within protein modification; protein lipoylation via endogenous pathway; protein N(6)-(lipoyl)lysine from octanoyl-[acyl-carrier-protein]: step 2/2. In terms of biological role, catalyzes the radical-mediated insertion of two sulfur atoms into the C-6 and C-8 positions of the octanoyl moiety bound to the lipoyl domains of lipoate-dependent enzymes, thereby converting the octanoylated domains into lipoylated derivatives. The sequence is that of Lipoyl synthase from Chlorobaculum tepidum (strain ATCC 49652 / DSM 12025 / NBRC 103806 / TLS) (Chlorobium tepidum).